The following is a 294-amino-acid chain: Small ribosomal subunit protein uS2 (294 aa).

A disordered region spans residues 254-294 (ESSNTEAPVAETAAAEAPVADAAIEAPVAEEAKTTEADDTK). Over residues 259-282 (EAPVAETAAAEAPVADAAIEAPVA) the composition is skewed to low complexity. Residues 283-294 (EEAKTTEADDTK) show a composition bias toward basic and acidic residues.

Belongs to the universal ribosomal protein uS2 family.

This Renibacterium salmoninarum (strain ATCC 33209 / DSM 20767 / JCM 11484 / NBRC 15589 / NCIMB 2235) protein is Small ribosomal subunit protein uS2.